We begin with the raw amino-acid sequence, 614 residues long: DNA ligase (614 aa).

NAD(+)-binding positions include 29–33 and 73–74; these read DQDYD and SI. The N6-AMP-lysine intermediate role is filled by Lys111. Positions 127, 158, and 270 each coordinate NAD(+). Cys358, Cys361, Cys374, and Cys380 together coordinate Zn(2+). The region spanning 538–614 is the BRCT domain; it reads TLTHELFDKK…MTETDYLSKI (77 aa).

This sequence belongs to the NAD-dependent DNA ligase family. LigA subfamily. Mg(2+) serves as cofactor. The cofactor is Mn(2+).

The catalysed reaction is NAD(+) + (deoxyribonucleotide)n-3'-hydroxyl + 5'-phospho-(deoxyribonucleotide)m = (deoxyribonucleotide)n+m + AMP + beta-nicotinamide D-nucleotide.. Its function is as follows. DNA ligase that catalyzes the formation of phosphodiester linkages between 5'-phosphoryl and 3'-hydroxyl groups in double-stranded DNA using NAD as a coenzyme and as the energy source for the reaction. It is essential for DNA replication and repair of damaged DNA. The sequence is that of DNA ligase from Ruthia magnifica subsp. Calyptogena magnifica.